The following is a 436-amino-acid chain: Septin-7 (436 aa).

Ser2 is modified (N-acetylserine). Tyr29 bears the Phosphotyrosine mark. The Septin-type G domain maps to 46–315 (RGFEFTLMVV…ENYRSRKLAA (270 aa)). Positions 46-316 (RGFEFTLMVV…NYRSRKLAAV (271 aa)) are interaction with SEPTIN12. A G1 motif region spans residues 56–63 (GESGLGKS). Residue 56–63 (GESGLGKS) coordinates GTP. At Ser76 the chain carries Phosphoserine. GTP-binding positions include Thr89, Gly115, and 194-202 (KADTLTPEE). Positions 112–115 (DTPG) are G3 motif. The segment at 193–196 (AKAD) is G4 motif. Thr227 is subject to Phosphothreonine. Residues Gly249 and Arg264 each contribute to the GTP site. A coiled-coil region spans residues 331–436 (TKSPLAQMEE…EKNKKKGKIF (106 aa)). Ser333 carries the post-translational modification Phosphoserine. At Lys372 the chain carries N6-acetyllysine. Residues 377–409 (ELQRRHEQMKKNLEAQHKELEEKRRQFEEEKAN) show a composition bias toward basic and acidic residues. The disordered stretch occupies residues 377–436 (ELQRRHEQMKKNLEAQHKELEEKRRQFEEEKANWEAQQRILEQQNSSRTLEKNKKKGKIF). The residue at position 423 (Ser423) is a Phosphoserine. Thr425 is modified (phosphothreonine).

Belongs to the TRAFAC class TrmE-Era-EngA-EngB-Septin-like GTPase superfamily. Septin GTPase family. Septins polymerize into heterooligomeric protein complexes that form filaments, and associate with cellular membranes, actin filaments and microtubules. GTPase activity is required for filament formation. Filaments are assembled from asymmetrical heterotrimers, composed of SEPTIN2, SEPTIN6 and SEPTIN7 that associate head-to-head to form a hexameric unit. Within the trimer, directly interacts with SEPTIN6, while interaction with SEPTIN2 seems indirect. In the absence of SEPTIN6, forms homodimers. Interacts directly with CENPE and links CENPE to septin filaments composed of SEPTIN2, SEPTIN6 and SEPTIN7. Interacts with SEPTIN5. Component of a septin core octameric complex consisting of SEPTIN12, SEPTIN7, SEPTIN6 and SEPTIN2 or SEPTIN4 in the order 12-7-6-2-2-6-7-12 or 12-7-6-4-4-6-7-12 and located in the sperm annulus; the SEPTIN12:SEPTIN7 association is mediated by the respective GTP-binding domains. Interacts with SEPTIN2, SEPTIN7, SEPTIN8, SEPTIN9 and SEPTIN11.

The protein localises to the cytoplasm. It localises to the chromosome. It is found in the centromere. The protein resides in the kinetochore. Its subcellular location is the cytoskeleton. The protein localises to the spindle. It localises to the cleavage furrow. It is found in the midbody. The protein resides in the cilium axoneme. Its subcellular location is the cell projection. The protein localises to the cilium. It localises to the flagellum. Functionally, filament-forming cytoskeletal GTPase. Required for normal organization of the actin cytoskeleton. Required for normal progress through mitosis. Involved in cytokinesis. Required for normal association of CENPE with the kinetochore. Plays a role in ciliogenesis and collective cell movements. Forms a filamentous structure with SEPTIN12, SEPTIN6, SEPTIN2 and probably SEPTIN4 at the sperm annulus which is required for the structural integrity and motility of the sperm tail during postmeiotic differentiation. This chain is Septin-7, found in Rattus norvegicus (Rat).